Consider the following 102-residue polypeptide: Large ribosomal subunit protein bL21 (102 aa).

The protein belongs to the bacterial ribosomal protein bL21 family. Part of the 50S ribosomal subunit. Contacts protein L20.

Its function is as follows. This protein binds to 23S rRNA in the presence of protein L20. The polypeptide is Large ribosomal subunit protein bL21 (Lactiplantibacillus plantarum (strain ATCC BAA-793 / NCIMB 8826 / WCFS1) (Lactobacillus plantarum)).